We begin with the raw amino-acid sequence, 548 residues long: uncharacterized protein (548 aa).

A DhaL domain is found at 8–200 (KLFADMIIQG…LLCVYEGFLK (193 aa)).

This is an uncharacterized protein from Staphylococcus aureus (strain NCTC 8325 / PS 47).